The primary structure comprises 373 residues: Putative citrate synthase 2 (373 aa).

Catalysis depends on residues H250 and E303.

The protein belongs to the citrate synthase family.

The catalysed reaction is oxaloacetate + acetyl-CoA + H2O = citrate + CoA + H(+). The protein operates within carbohydrate metabolism; tricarboxylic acid cycle; isocitrate from oxaloacetate: step 1/2. The sequence is that of Putative citrate synthase 2 (citA) from Mycobacterium bovis (strain ATCC BAA-935 / AF2122/97).